We begin with the raw amino-acid sequence, 110 residues long: Large ribosomal subunit protein P2 (110 aa).

The segment at 63-110 (ASVPSGGGVAAAAPAAGGGGADPAEAKEEKKEEPEEESDDDMGFGLFD) is disordered. Residues 86–95 (AEAKEEKKEE) show a composition bias toward basic and acidic residues.

Belongs to the eukaryotic ribosomal protein P1/P2 family. P1 and P2 exist as dimers at the large ribosomal subunit. Post-translationally, phosphorylated.

Functionally, plays an important role in the elongation step of protein synthesis. This is Large ribosomal subunit protein P2 from Cryptochiton stelleri (Giant gumboot chiton).